Reading from the N-terminus, the 152-residue chain is Deoxyuridine 5'-triphosphate nucleotidohydrolase (152 aa).

Residues 71–73 (RSG), Asn-84, 88–90 (LID), and Lys-98 each bind substrate.

It belongs to the dUTPase family. The cofactor is Mg(2+).

The enzyme catalyses dUTP + H2O = dUMP + diphosphate + H(+). Its pathway is pyrimidine metabolism; dUMP biosynthesis; dUMP from dCTP (dUTP route): step 2/2. This enzyme is involved in nucleotide metabolism: it produces dUMP, the immediate precursor of thymidine nucleotides and it decreases the intracellular concentration of dUTP so that uracil cannot be incorporated into DNA. The chain is Deoxyuridine 5'-triphosphate nucleotidohydrolase from Legionella pneumophila subsp. pneumophila (strain Philadelphia 1 / ATCC 33152 / DSM 7513).